A 736-amino-acid chain; its full sequence is 1,4-alpha-glucan branching enzyme GlgB (736 aa).

Asp419 acts as the Nucleophile in catalysis. Residue Glu472 is the Proton donor of the active site.

Belongs to the glycosyl hydrolase 13 family. GlgB subfamily. Monomer.

It catalyses the reaction Transfers a segment of a (1-&gt;4)-alpha-D-glucan chain to a primary hydroxy group in a similar glucan chain.. It participates in glycan biosynthesis; glycogen biosynthesis. Functionally, catalyzes the formation of the alpha-1,6-glucosidic linkages in glycogen by scission of a 1,4-alpha-linked oligosaccharide from growing alpha-1,4-glucan chains and the subsequent attachment of the oligosaccharide to the alpha-1,6 position. This Rhizobium meliloti (strain 1021) (Ensifer meliloti) protein is 1,4-alpha-glucan branching enzyme GlgB.